The following is a 543-amino-acid chain: Cytochrome P450 2U1 (543 aa).

The next 4 helical transmembrane spans lie at 32–52 (PTGG…SWLW), 58–78 (GIPP…VLLP), 261–281 (VCLN…YLPF), and 342–362 (LFYI…NSLL). Heme is bound at residue Cys-490. Residues 495–515 (LAKMELFLMFVSLMQSFTFVL) form a helical membrane-spanning segment.

This sequence belongs to the cytochrome P450 family. Requires heme as cofactor.

The protein localises to the endoplasmic reticulum membrane. Its subcellular location is the microsome membrane. It localises to the mitochondrion inner membrane. The enzyme catalyses an omega-methyl-long-chain fatty acid + reduced [NADPH--hemoprotein reductase] + O2 = an omega-hydroxy-long-chain fatty acid + oxidized [NADPH--hemoprotein reductase] + H2O + H(+). It carries out the reaction (5Z,8Z,11Z,14Z)-eicosatetraenoate + reduced [NADPH--hemoprotein reductase] + O2 = 19-hydroxy-(5Z,8Z,11Z,14Z)-eicosatetraenoate + oxidized [NADPH--hemoprotein reductase] + H2O + H(+). The catalysed reaction is (5Z,8Z,11Z,14Z)-eicosatetraenoate + reduced [NADPH--hemoprotein reductase] + O2 = 20-hydroxy-(5Z,8Z,11Z,14Z)-eicosatetraenoate + oxidized [NADPH--hemoprotein reductase] + H2O + H(+). It catalyses the reaction N-[(5Z,8Z,11Z,14Z)-eicosatetraenoyl]-serotonin + reduced [NADPH--hemoprotein reductase] + O2 = 2-oxo-N-[(5Z,8Z,11Z,14Z)-eicosatetraenoyl]-serotonin + oxidized [NADPH--hemoprotein reductase] + H2O + H(+). Functionally, a cytochrome P450 monooxygenase involved in the metabolism of arachidonic acid and its conjugates. Mechanistically, uses molecular oxygen inserting one oxygen atom into a substrate, and reducing the second into a water molecule, with two electrons provided by NADPH via cytochrome P450 reductase (CPR; NADPH-ferrihemoprotein reductase). Acts as an omega and omega-1 hydroxylase for arachidonic acid and possibly for other long chain fatty acids. May modulate the arachidonic acid signaling pathway and play a role in other fatty acid signaling processes. May down-regulate the biological activities of N-arachidonoyl-serotonin, an endocannabinoid that has anti-nociceptive effects through inhibition of fatty acid amide hydrolase FAAH, TRPV1 receptor and T-type calcium channels. Catalyzes C-2 oxidation of the indole ring of N-arachidonoyl-serotonin forming a less active product 2-oxo-N-arachidonoyl-serotonin. This Bos taurus (Bovine) protein is Cytochrome P450 2U1 (CYP2U1).